The sequence spans 228 residues: L-ribulose-5-phosphate 4-epimerase UlaF (228 aa).

Substrate contacts are provided by residues 26 to 27 (GN), 43 to 44 (SG), and 72 to 73 (SS). The Zn(2+) site is built by aspartate 74, histidine 93, and histidine 95. Aspartate 118 functions as the Proton donor/acceptor in the catalytic mechanism. Histidine 167 is a binding site for Zn(2+). The Proton donor/acceptor role is filled by tyrosine 225.

Belongs to the aldolase class II family. AraD/FucA subfamily. The cofactor is Zn(2+).

The catalysed reaction is L-ribulose 5-phosphate = D-xylulose 5-phosphate. It participates in cofactor degradation; L-ascorbate degradation; D-xylulose 5-phosphate from L-ascorbate: step 4/4. Catalyzes the isomerization of L-ribulose 5-phosphate to D-xylulose 5-phosphate. Is involved in the anaerobic L-ascorbate utilization. The chain is L-ribulose-5-phosphate 4-epimerase UlaF from Shigella dysenteriae serotype 1 (strain Sd197).